The following is a 318-amino-acid chain: MNYQVLLYYKYTTIDDPEQFAQDHLAFCKAHHLKGRILVSTEGINGTLSGTKEETEQYMAHMHADERFKDMVFKIDEAEGHAFKKMHVRPRKEIVALDLEEDVDPRHTTGQYLSPVEFRKALEDDDTVIIDARNDYEFDLGHFRGAIRPNITRFRDLPDWIKENKALFADKKVVTYCTGGIRCEKFSGWLLKEGFEDVAQLHGGIATYGKDPETKGQYWDGKMYVFDDRISVDINQVEKTIIGKDWFDGKPCERYINCANPECNKQILVSEENEAKYLGACSYDCAKHERNRYVQANNISGNEWQQRLTNFDDLHQHA.

The Rhodanese domain occupies 123 to 217 (EDDDTVIIDA…YGKDPETKGQ (95 aa)). Catalysis depends on Cys177, which acts as the Cysteine persulfide intermediate.

This sequence belongs to the TrhO family.

The catalysed reaction is uridine(34) in tRNA + AH2 + O2 = 5-hydroxyuridine(34) in tRNA + A + H2O. Catalyzes oxygen-dependent 5-hydroxyuridine (ho5U) modification at position 34 in tRNAs. The sequence is that of tRNA uridine(34) hydroxylase from Staphylococcus aureus (strain MRSA252).